The primary structure comprises 1267 residues: BOS complex subunit NOMO2 (1267 aa).

Residues 1–31 form the signal peptide; that stretch reads MLVGQGAGLLGPAVVTAAVVLLLSGVGPAHG. Over 32–1155 the chain is Lumenal; it reads SEDIVVGCGG…NPTRKLPEQD (1124 aa). 3 N-linked (GlcNAc...) asparagine glycosylation sites follow: N50, N218, and N618. The chain crosses the membrane as a helical span at residues 1156 to 1176; the sequence is IAQGSYIALPLTLLVLLAGYN. Over 1177-1267 the chain is Cytoplasmic; it reads HDKLIPLLLQ…LETTATCIHY (91 aa). The disordered stretch occupies residues 1198-1219; sequence GQAASDNSGPEDAKRQAKKQKT.

As to quaternary structure, component of the back of Sec61 (BOS) complex, composed of NCLN/Nicalin, NOMO (NOMO1, NOMO2 or NOMO3) and TMEM147. The BOS complex is part of the multi-pass translocon (MPT) complex, composed of three subcomplexes, the GEL complex (composed of RAB5IF/OPTI and TMCO1), the BOS complex (composed of NCLN/Nicalin, NOMO and TMEM147) and the PAT complex (composed of WDR83OS/Asterix and CCDC47). The MPT complex associates with the SEC61 complex. Due to the strong similarity between NOMO1, NOMO2 and NOMO3, similar interaction pattern probably occur for the three gene copies. As to expression, highly expressed in pancreas and skeletal muscle and, at lower levels, in heart.

The protein localises to the endoplasmic reticulum membrane. Its function is as follows. Component of the multi-pass translocon (MPT) complex that mediates insertion of multi-pass membrane proteins into the lipid bilayer of membranes. The MPT complex takes over after the SEC61 complex: following membrane insertion of the first few transmembrane segments of proteins by the SEC61 complex, the MPT complex occludes the lateral gate of the SEC61 complex to promote insertion of subsequent transmembrane regions. The protein is BOS complex subunit NOMO2 (NOMO2) of Homo sapiens (Human).